The following is a 459-amino-acid chain: Adenylosuccinate synthetase isozyme 1 C (459 aa).

The disordered stretch occupies residues 1–31 (MSFSWSAKDHKSYTNPPSNPTQGLKRPRNDT). The span at 13-22 (YTNPPSNPTQ) shows a compositional bias: polar residues. GTP-binding positions include 44–50 (GDEGKGK) and 72–74 (GHT). Aspartate 45 (proton acceptor) is an active-site residue. Aspartate 45 and glycine 72 together coordinate Mg(2+). Residue aspartate 45 participates in substrate binding. IMP contacts are provided by residues 45 to 48 (DEGK), 70 to 73 (NAGH), threonine 165, arginine 179, asparagine 258, threonine 273, and arginine 337. Histidine 73 functions as the Proton donor in the catalytic mechanism. 333 to 339 (VTTGRKR) lines the substrate pocket. GTP-binding positions include arginine 339, 365 to 367 (KLD), and 447 to 450 (GVGK).

The protein belongs to the adenylosuccinate synthetase family. As to quaternary structure, homodimer. Requires Mg(2+) as cofactor.

It localises to the cytoplasm. The enzyme catalyses IMP + L-aspartate + GTP = N(6)-(1,2-dicarboxyethyl)-AMP + GDP + phosphate + 2 H(+). It functions in the pathway purine metabolism; AMP biosynthesis via de novo pathway; AMP from IMP: step 1/2. Its function is as follows. Component of the purine nucleotide cycle (PNC), which interconverts IMP and AMP to regulate the nucleotide levels in various tissues, and which contributes to glycolysis and ammoniagenesis. Catalyzes the first committed step in the biosynthesis of AMP from IMP. This chain is Adenylosuccinate synthetase isozyme 1 C (adss1c), found in Salmo salar (Atlantic salmon).